A 451-amino-acid polypeptide reads, in one-letter code: Tubulin alpha-1A chain (451 aa).

The GTP site is built by Gly10, Gln11, Ala12, and Gln15. Lys40 bears the N6-acetyllysine mark. The GTP site is built by Glu71, Ala99, Ser140, Gly143, Gly144, Thr145, Gly146, Thr179, Glu183, Asn206, Tyr224, Asn228, and Leu252. Residue Glu71 participates in Mg(2+) binding. Residue Glu254 is part of the active site. Residue Tyr282 is modified to 3'-nitrotyrosine. At Ser439 the chain carries Phosphoserine. 2 positions are modified to 5-glutamyl polyglutamate: Glu443 and Glu445. Residue Tyr451 is modified to 3'-nitrotyrosine.

Belongs to the tubulin family. As to quaternary structure, heterodimer of alpha- and beta-tubulin. A typical microtubule is a hollow water-filled tube with an outer diameter of 25 nm and an inner diameter of 15 nM. Alpha-beta heterodimers associate head-to-tail to form protofilaments running lengthwise along the microtubule wall with the beta-tubulin subunit facing the microtubule plus end conferring a structural polarity. Microtubules usually have 13 protofilaments but different protofilament numbers can be found in some organisms and specialized cells. Interacts with gamma-tubulin; the interaction allows microtubules to nucleate from the gamma-tubulin ring complex (gTuRC). Nascent microtubule interacts (via alpha-tubulin MREC motif) with TTC5/STRAP; this interaction may result in tubulin mRNA-targeted degradation. Component of sperm flagellar doublet microtubules. Mg(2+) serves as cofactor. In terms of processing, some glutamate residues at the C-terminus are polyglycylated, resulting in polyglycine chains on the gamma-carboxyl group. Glycylation is mainly limited to tubulin incorporated into axonemes (cilia and flagella) whereas glutamylation is prevalent in neuronal cells, centrioles, axonemes, and the mitotic spindle. Both modifications can coexist on the same protein on adjacent residues, and lowering polyglycylation levels increases polyglutamylation, and reciprocally. Cilia and flagella glycylation is required for their stability and maintenance. Flagella glycylation controls sperm motility. Post-translationally, some glutamate residues at the C-terminus are polyglutamylated, resulting in polyglutamate chains on the gamma-carboxyl group. Polyglutamylation plays a key role in microtubule severing by spastin (SPAST). SPAST preferentially recognizes and acts on microtubules decorated with short polyglutamate tails: severing activity by SPAST increases as the number of glutamates per tubulin rises from one to eight, but decreases beyond this glutamylation threshold. Glutamylation is also involved in cilia motility. Acetylation of alpha chains at Lys-40 is located inside the microtubule lumen. This modification has been correlated with increased microtubule stability, intracellular transport and ciliary assembly. In terms of processing, methylation of alpha chains at Lys-40 is found in mitotic microtubules and is required for normal mitosis and cytokinesis contributing to genomic stability. Post-translationally, nitration of Tyr-451 is irreversible and interferes with normal dynein intracellular distribution. Undergoes a tyrosination/detyrosination cycle, the cyclic removal and re-addition of a C-terminal tyrosine residue by the enzymes tubulin tyrosine carboxypeptidase (MATCAP1, VASH1 or VASH2) and tubulin tyrosine ligase (TTL), respectively. In terms of processing, tyrosination promotes microtubule interaction with CAP-Gly domain-containing proteins such as CLIP1, CLIP2 and DCTN1. Tyrosination regulates the initiation of dynein-dynactin motility via interaction with DCTN1, which brings the dynein-dynactin complex into contact with microtubules. In neurons, tyrosinated tubulins mediate the initiation of retrograde vesicle transport. Post-translationally, detyrosination is involved in metaphase plate congression by guiding chromosomes during mitosis: detyrosination promotes interaction with CENPE, promoting pole-proximal transport of chromosomes toward the equator. Detyrosination increases microtubules-dependent mechanotransduction in dystrophic cardiac and skeletal muscle. In cardiomyocytes, detyrosinated microtubules are required to resist to contractile compression during contraction: detyrosination promotes association with desmin (DES) at force-generating sarcomeres, leading to buckled microtubules and mechanical resistance to contraction.

The protein resides in the cytoplasm. Its subcellular location is the cytoskeleton. It localises to the flagellum axoneme. It catalyses the reaction GTP + H2O = GDP + phosphate + H(+). Functionally, tubulin is the major constituent of microtubules, protein filaments consisting of alpha- and beta-tubulin heterodimers. Microtubules grow by the addition of GTP-tubulin dimers to the microtubule end, where a stabilizing cap forms. Below the cap, tubulin dimers are in GDP-bound state, owing to GTPase activity of alpha-tubulin. In Sus scrofa (Pig), this protein is Tubulin alpha-1A chain (TUBA1A).